The chain runs to 927 residues: Isoleucine--tRNA ligase (927 aa).

Residues P60–H70 carry the 'HIGH' region motif. E557 provides a ligand contact to L-isoleucyl-5'-AMP. The 'KMSKS' region signature appears at K598–S602. Residue K601 participates in ATP binding. Residues C895, C898, C915, and C918 each contribute to the Zn(2+) site.

This sequence belongs to the class-I aminoacyl-tRNA synthetase family. IleS type 1 subfamily. In terms of assembly, monomer. The cofactor is Zn(2+).

The protein localises to the cytoplasm. It carries out the reaction tRNA(Ile) + L-isoleucine + ATP = L-isoleucyl-tRNA(Ile) + AMP + diphosphate. In terms of biological role, catalyzes the attachment of isoleucine to tRNA(Ile). As IleRS can inadvertently accommodate and process structurally similar amino acids such as valine, to avoid such errors it has two additional distinct tRNA(Ile)-dependent editing activities. One activity is designated as 'pretransfer' editing and involves the hydrolysis of activated Val-AMP. The other activity is designated 'posttransfer' editing and involves deacylation of mischarged Val-tRNA(Ile). This Syntrophomonas wolfei subsp. wolfei (strain DSM 2245B / Goettingen) protein is Isoleucine--tRNA ligase.